Reading from the N-terminus, the 971-residue chain is MNMNQYYDLDNGKNVMFMNDASSTSGYSSSTSPNSTNRSFSPAHSPKTMELQTDFANLNLPGGNSPHQPPMANSPYQNQLLNNGGICQLGATNLINSTGVSFGVANVTSFGNMYMDHQYFVPAPATVPPSQNFGYHQNGLASDGDIKHVPQLRIVEQPVEKFRFRYKSEMHGTHGSLNGANSKRTPKTFPEVTLCNYDGPAVIRCSLFQTNLDSPHSHQLVVRKDDRDVCDPHDLHVSKERGYVAQFINMGIIHTAKKYIFEELCKKKQDRLVFQMNRRELSHKQLQELHQETEREAKDMNLNQVRLCFEAFKIEDNGAWVPLAPPVYSNAINNRKSAQTGELRIVRLSKPTGGVMGNDELILLVEKVSKKNIKVRFFEEDEDGETVWEAYAKFRESDVHHQYAIVCQTPPYKDKDVDREVNVYIELIRPSDDERSFPALPFRYKPRSVIVSRKRRRTGSSANSSSSGTESSNNSLDLPKTLGLAQPPNGLPNLSQHDQTISEEFGREKHLNEFIASEDFRKLIEHNSSDLEKICQLDMGELQHDGHNRAEVPSHRNRTIKCLDDLFEIYKQDRISPIKISHHKVEKWFIEHALNNYNRDTLLHEVISHKKDKLKLAIQTIQVMNYFNLKDVVNSTLNADGDSALHVACQQDRAHYIRPLLGMGCNPNLKNNAGNTPLHVAVKEEHLSCVESFLNGVPTVQLDLSLTNDDGLTPLHMAIRQNKYDVAKKLISYDRTSISVANTMDGNNALHMAVLEQSVELLVLILDAQNENLTDILQAQNAAGHTPLELAERKANDRVVQLLKNVYPEKGELAMTWIPCKVKEEIDSSSDESSDAGQLEIKSEEMDIETKDEDSVELDLSSGPRRQKDESSRDTEMDNNKLQLLLKNKFIYDRLCSLLNQPLGHGSDPQDRKWMQLARQTHLKQFAFIWLGAEDLLDHVKRKGASVEFSTFARALQAVDPQAYALLVNPT.

Positions 23 to 41 (STSGYSSSTSPNSTNRSFS) are enriched in low complexity. The disordered stretch occupies residues 23-46 (STSGYSSSTSPNSTNRSFSPAHSP). The 193-residue stretch at 147–339 (KHVPQLRIVE…NAINNRKSAQ (193 aa)) folds into the RHD domain. Position 431 is a phosphoserine; by PKA (Ser431). The short motif at 452-457 (SRKRRR) is the Nuclear localization signal element. Positions 453–496 (RKRRRTGSSANSSSSGTESSNNSLDLPKTLGLAQPPNGLPNLSQ) are disordered. Positions 460–475 (SSANSSSSGTESSNNS) are enriched in low complexity. Residue Thr620 is modified to Phosphothreonine. Tyr626 carries the post-translational modification Phosphotyrosine. ANK repeat units follow at residues 640–669 (DGDS…NPNL), 673–702 (AGNT…TVQL), 710–740 (DGLT…SISV), 745–775 (DGNN…NLTD), and 783–812 (AGHT…EKGE). Residues 826 to 877 (IDSSSDESSDAGQLEIKSEEMDIETKDEDSVELDLSSGPRRQKDESSRDTEM) are disordered. The segment covering 866 to 877 (RQKDESSRDTEM) has biased composition (basic and acidic residues). Ser950 carries the phosphoserine modification.

Rel-p68 subunit interacts with Dredd. Interacts with DMAP1. Interacts with akirin; interaction is immune stimulation-dependent; activates selected rel target gene promoters. Phosphorylated by lipopolysaccharide (LPS)-activated I-kappa-B kinase complex before being cleaved. Rel-p110 subunit is cleaved within seconds of an immune challenge into Rel-p49 subunit and Rel-p68 subunit. Rel-p110 subunit reappears after 45 minutes.

The protein localises to the nucleus. It localises to the cytoplasm. Its function is as follows. Transcription factor that plays a key role in the humoral immune response as part of the peptidoglycan recognition protein (IMD) signaling pathway. Rel-p68 subunit translocates to the nucleus where it binds to the promoter of the Cecropin A1 gene and probably other antimicrobial peptide genes. I-kappa-B kinase complex (IKKbeta and key) and PGRP-LC are essential signaling components in transmitting the lipopolysaccharide (LPS) signal leading to cact degradation for NF-kappa-B (rel) activation. Part of a Toll-related receptor pathway that functions in the apoptosis of unfit cells during cell competition. Also part of some antiviral immunity: activated downstream of Sting signaling, which detects double-stranded RNA (dsRNA) from viruses, and promotes expression of antiviral effector genes. May be part of a NF-kappa-B and Tollo signaling cascade that regulates development of the peripheral nervous system. Possibly post-transcriptionally regulates the neuron-specific genes sc and ase, by promoting the rapid turnover of their transcripts in the wing imaginal disk. The protein is Nuclear factor NF-kappa-B p110 subunit of Drosophila melanogaster (Fruit fly).